An 85-amino-acid chain; its full sequence is U4-theraphotoxin-Hhn1m (85 aa).

An N-terminal signal peptide occupies residues 1 to 22; it reads MKVTLIAILTCAAVLVLHTTAA. Positions 23–48 are excised as a propeptide; it reads EELEAESQLVEVGMPDTELAAVDEER. Cystine bridges form between Cys52–Cys66, Cys56–Cys77, and Cys71–Cys82.

Belongs to the neurotoxin 12 (Hwtx-2) family. 02 (Hwtx-2) subfamily. In terms of tissue distribution, expressed by the venom gland.

It localises to the secreted. Functionally, postsynaptic neurotoxin. This chain is U4-theraphotoxin-Hhn1m, found in Cyriopagopus hainanus (Chinese bird spider).